Here is a 78-residue protein sequence, read N- to C-terminus: Probable [Fe-S]-dependent transcriptional repressor (78 aa).

4 residues coordinate iron-sulfur cluster: C56, C61, C64, and C70.

It belongs to the FeoC family.

Functionally, may function as a transcriptional regulator that controls feoABC expression. The chain is Probable [Fe-S]-dependent transcriptional repressor from Salmonella heidelberg (strain SL476).